Here is a 320-residue protein sequence, read N- to C-terminus: Ferrochelatase (320 aa).

Fe cation contacts are provided by His-194 and Glu-275.

This sequence belongs to the ferrochelatase family. Monomer.

It is found in the cytoplasm. The enzyme catalyses heme b + 2 H(+) = protoporphyrin IX + Fe(2+). Its pathway is porphyrin-containing compound metabolism; protoheme biosynthesis; protoheme from protoporphyrin-IX: step 1/1. In terms of biological role, catalyzes the ferrous insertion into protoporphyrin IX. The protein is Ferrochelatase of Escherichia coli O81 (strain ED1a).